The primary structure comprises 70 residues: DNA-directed RNA polymerase subunit epsilon (70 aa).

The protein belongs to the RNA polymerase subunit epsilon family. In terms of assembly, RNAP is composed of a core of 2 alpha, a beta and a beta' subunit. The core is associated with a delta subunit, and at least one of epsilon or omega. When a sigma factor is associated with the core the holoenzyme is formed, which can initiate transcription.

It carries out the reaction RNA(n) + a ribonucleoside 5'-triphosphate = RNA(n+1) + diphosphate. Functionally, a non-essential component of RNA polymerase (RNAP). The polypeptide is DNA-directed RNA polymerase subunit epsilon (Limosilactobacillus reuteri (strain DSM 20016) (Lactobacillus reuteri)).